Reading from the N-terminus, the 175-residue chain is MTAFTRFAHSRASWFILTGSAIALEAAALYFQYVMKLDPCVMCIYQRLAVFGILASGLIGMTAPKFLIVRILGAIGWAVSATWGLKLALALVDMQNNPSPFSTCSFLPEFPAWMPLHEWFPSVMLPTGMCTDVPWQFMGVTMAEWMVVAFSGYLVALLLFIVPILSGSNKPSLYK.

Over 1 to 13 the chain is Cytoplasmic; it reads MTAFTRFAHSRAS. Residues 14–30 traverse the membrane as a helical segment; it reads WFILTGSAIALEAAALY. Over 31 to 48 the chain is Periplasmic; that stretch reads FQYVMKLDPCVMCIYQRL. A disulfide bridge links C40 with C43. A helical membrane pass occupies residues 49 to 64; sequence AVFGILASGLIGMTAP. The Cytoplasmic portion of the chain corresponds to 65–71; the sequence is KFLIVRI. The chain crosses the membrane as a helical span at residues 72–89; it reads LGAIGWAVSATWGLKLAL. Over 90 to 144 the chain is Periplasmic; that stretch reads ALVDMQNNPSPFSTCSFLPEFPAWMPLHEWFPSVMLPTGMCTDVPWQFMGVTMAE. C104 and C130 are joined by a disulfide. The chain crosses the membrane as a helical span at residues 145-163; sequence WMVVAFSGYLVALLLFIVP. Residues 164–175 are Cytoplasmic-facing; that stretch reads ILSGSNKPSLYK.

The protein belongs to the DsbB family.

The protein resides in the cell inner membrane. Functionally, required for disulfide bond formation in some periplasmic proteins. Acts by oxidizing the DsbA protein. This is Disulfide bond formation protein B from Shewanella sp. (strain ANA-3).